A 284-amino-acid chain; its full sequence is Anaerobic dimethyl sulfoxide reductase chain YnfH (284 aa).

At 1 to 9 the chain is on the periplasmic side; that stretch reads MGNGWHEWP. Residues 10 to 30 form a helical membrane-spanning segment; sequence LVIFTVLGQCVVGALIVSGIG. The Cytoplasmic portion of the chain corresponds to 31–45; the sequence is WFAAKNDADRQRIVR. Residues 46–66 traverse the membrane as a helical segment; that stretch reads GMFFLWLLMGVGFIASVMHLG. Over 67 to 86 the chain is Periplasmic; that stretch reads SPLRAFNSLNRIGASGLSNE. A helical membrane pass occupies residues 87-107; the sequence is IAAGSIFFAVGGLWWLVAVIG. Residues 108–115 lie on the Cytoplasmic side of the membrane; it reads KMPQALGK. Residues 116 to 136 traverse the membrane as a helical segment; that stretch reads LWLLFSMALGVIFVWMMTCVY. Residues 137–148 are Periplasmic-facing; that stretch reads QIDTVPTWHNGY. The chain crosses the membrane as a helical span at residues 149-169; the sequence is TTLAFFLTVLLSGPILAAAIL. Residues 170 to 180 lie on the Cytoplasmic side of the membrane; it reads RAARVTFNTTP. Residues 181 to 201 traverse the membrane as a helical segment; the sequence is FAIISVLALIACAGVIVLQGL. At 202–222 the chain is on the periplasmic side; that stretch reads SLASIHSSVQQASALVPDYAS. Residues 223 to 243 form a helical membrane-spanning segment; that stretch reads LQVWRVVLLCAGLGCWLCPLI. The Cytoplasmic portion of the chain corresponds to 244 to 250; that stretch reads RRREPHV. Residues 251-271 traverse the membrane as a helical segment; sequence AGLILGLILILGGEMIGRVLF. Over 272 to 284 the chain is Periplasmic; it reads YGLHMTVGMAIAG.

Belongs to the DmsC family. In terms of assembly, the complex consists of three subunits: YnfF, the reductase; YnfG, an electron transfer protein, and YnfH, a membrane anchor protein.

The protein resides in the cell inner membrane. Terminal reductase during anaerobic growth on various sulfoxide and N-oxide compounds. The C subunit anchors the other two subunits to the membrane and stabilize the catalytic subunits. This chain is Anaerobic dimethyl sulfoxide reductase chain YnfH (ynfH), found in Escherichia coli (strain K12).